The chain runs to 430 residues: Enolase (430 aa).

Glutamine 163 is a (2R)-2-phosphoglycerate binding site. The active-site Proton donor is the glutamate 205. Mg(2+) contacts are provided by aspartate 242, glutamate 287, and aspartate 314. (2R)-2-phosphoglycerate-binding residues include lysine 339, arginine 368, serine 369, and lysine 390. Catalysis depends on lysine 339, which acts as the Proton acceptor.

It belongs to the enolase family. The cofactor is Mg(2+).

It is found in the cytoplasm. The protein resides in the secreted. Its subcellular location is the cell surface. The catalysed reaction is (2R)-2-phosphoglycerate = phosphoenolpyruvate + H2O. It functions in the pathway carbohydrate degradation; glycolysis; pyruvate from D-glyceraldehyde 3-phosphate: step 4/5. Its function is as follows. Catalyzes the reversible conversion of 2-phosphoglycerate (2-PG) into phosphoenolpyruvate (PEP). It is essential for the degradation of carbohydrates via glycolysis. This chain is Enolase, found in Bacillus velezensis (strain DSM 23117 / BGSC 10A6 / LMG 26770 / FZB42) (Bacillus amyloliquefaciens subsp. plantarum).